A 2225-amino-acid polypeptide reads, in one-letter code: Genome polyprotein (2225 aa).

Short sequence motifs ((L)YPX(n)L motif) lie at residues 167 to 171 (YPHGL) and 200 to 205 (YPVWEL). An involved in P1-2A pentamerization region spans residues 766 to 836 (MMSRIAAGDL…PRKMKGLFSQ (71 aa)). Residues 1011 to 1031 (TVDIVNIVLCFVKSGILLYVI) traverse the membrane as a helical segment. The interval 1043–1070 (IGLLRVMNYADIGCSVISCGKVFSKMLE) is membrane-penetrating ability. Residues 1127-1152 (KKKDVLNVLKDNQQRIERAIEEADNF) adopt a coiled-coil conformation. The 163-residue stretch at 1204–1366 (HQKLKNLGSI…SFFQNPHNDM (163 aa)) folds into the SF3 helicase domain. 1230–1237 (GKRGGGKS) contacts ATP. Residues 1460–1480 (WVAVGAAVGILGVLVGGWFVY) traverse the membrane as a helical segment. O-(5'-phospho-RNA)-tyrosine is present on Tyr1497. The region spanning 1512–1726 (DPVESQSTLE…VAKLVTQEMF (215 aa)) is the Peptidase C3 domain. Residues His1561, Asp1601, and Cys1689 each act as for protease 3C activity in the active site. The 122-residue stretch at 1974–2095 (DVGLDLDFSA…VFSRDIQIDN (122 aa)) folds into the RdRp catalytic domain.

Belongs to the picornaviridae polyprotein family. In terms of assembly, homodimer. Homomultimer; probably interacts with membranes in a multimeric form. Seems to assemble into amyloid-like fibers. Homodimer. Monomer. Interacts with protein 3CD. As to quaternary structure, interacts with host ACBD3. In terms of assembly, interacts with protein 3AB. Interacts with human MAVS. As to quaternary structure, homodimer; disulfide-linked. In terms of assembly, homopentamer. Homooligomer. Interacts with capsid protein VP2. Interacts with capsid protein VP3. As to quaternary structure, interacts with capsid protein VP1. Interacts with capsid protein VP3. In terms of assembly, interacts with capsid protein VP1. Interacts with capsid protein VP2. In terms of processing, specific enzymatic cleavages by viral protease in vivo yield a variety of precursors and mature proteins. Polyprotein processing intermediates are produced, such as P1-2A which is a functional precursor of the structural proteins, VP0 which is a VP4-VP2 precursor, VP1-2A precursor, 3ABC precursor which is a stable and catalytically active precursor of 3A, 3B and 3C proteins, 3AB and 3CD precursors. The assembly signal 2A is removed from VP1-2A by a host protease, possibly host Cathepsin L. This cleavage occurs over a region of 3 amino-acids probably generating VP1 proteins with heterogeneous C-termini. Post-translationally, during virion maturation, immature virions are rendered infectious following cleavage of VP0 into VP4 and VP2. This maturation seems to be an autocatalytic event triggered by the presence of RNA in the capsid and is followed by a conformational change of the particle. The assembly signal 2A is removed from VP1-2A by a host protease, possibly host Cathepsin L in naked virions. This cleavage does not occur in enveloped virions. This cleavage occurs over a region of 3 amino-acids probably generating VP1 proteins with heterogeneous C-termini. In terms of processing, VPg is uridylylated prior to priming replication into VPg-pUpU. Post-translationally, unlike other picornaviruses, does not seem to be myristoylated.

It localises to the virion. The protein localises to the host endosome. Its subcellular location is the host multivesicular body. The protein resides in the host membrane. It is found in the host mitochondrion outer membrane. It localises to the host cytoplasm. The protein localises to the host cytoplasmic vesicle membrane. It catalyses the reaction RNA(n) + a ribonucleoside 5'-triphosphate = RNA(n+1) + diphosphate. It carries out the reaction a ribonucleoside 5'-triphosphate + H2O = a ribonucleoside 5'-diphosphate + phosphate + H(+). The catalysed reaction is Selective cleavage of Gln-|-Gly bond in the poliovirus polyprotein. In other picornavirus reactions Glu may be substituted for Gln, and Ser or Thr for Gly.. Its function is as follows. Capsid proteins VP1, VP2, and VP3 form a closed capsid enclosing the viral positive strand RNA genome. All these proteins contain a beta-sheet structure called beta-barrel jelly roll. Together they form an icosahedral capsid (T=3) composed of 60 copies of each VP1, VP2, and VP3, with a diameter of approximately 300 Angstroms. VP1 is situated at the 12 fivefold axes, whereas VP2 and VP3 are located at the quasi-sixfold axes. The naked capsid interacts with the host receptor HAVCR1 to provide virion attachment to and probably entry into the target cell. Functionally, VP0 precursor is a component of the immature procapsids. Plays a role in the assembly of the 12 pentamers into an icosahedral structure. Has not been detected in mature virions, supposedly owing to its small size. In terms of biological role, precursor component of immature procapsids that corresponds to an extended form of the structural protein VP1. After maturation, possibly by the host Cathepsin L, the assembly signal 2A is cleaved to give rise to the mature VP1 protein. Its function is as follows. Functions as a viroporin. Affects membrane integrity and causes an increase in membrane permeability. Involved in host intracellular membrane rearrangements probably to give rise to the viral factories. Does not disrupt calcium homeostasis or glycoprotein trafficking. Antagonizes the innate immune response of the host by suppressing IFN-beta synthesis, which it achieves by interfering with the RIG-I/IFIH1 pathway. Functionally, affects membrane integrity and causes an increase in membrane permeability. Associates with and induces structural rearrangements of intracellular membranes. Displays RNA-binding activity. In terms of biological role, the precursor 3ABC is targeted to the mitochondrial membrane where protease 3C activity cleaves and inhibits the host antiviral protein MAVS, thereby disrupting activation of IRF3 through the IFIH1/MDA5 pathway. In vivo, the protease activity of 3ABC precursor is more efficient in cleaving the 2BC precursor than that of protein 3C. The 3ABC precursor may therefore play a role in the proteolytic processing of the polyprotein. Possible viroporin. Its function is as follows. Interacts with the 3CD precursor and with RNA structures found at both the 5'- and 3'-termini of the viral genome. Since the 3AB precursor contains the hydrophobic domain 3A, it probably anchors the whole viral replicase complex to intracellular membranes on which viral RNA synthesis occurs. Functionally, may serve as membrane anchor to the 3AB and 3ABC precursors via its hydrophobic domain. May interact with RNA. Acts as a primer for viral RNA replication and remains covalently bound to viral genomic RNA. VPg is uridylylated prior to priming replication into VPg-pUpU. The VPg-pUpU is then used as primer on the genomic RNA poly(A) by the RNA-dependent RNA polymerase to replicate the viral genome. In terms of biological role, cysteine protease that generates mature viral proteins from the precursor polyprotein. In addition to its proteolytic activity, it binds to viral RNA, and thus influences viral genome replication. RNA and substrate bind cooperatively to the protease. Cleaves IKBKG/NEMO to impair innate immune signaling. Cleaves host PABPC1 which may participate in the switch of viral translation to RNA synthesis. Its function is as follows. Interacts with the 3AB precursor and with RNA structures found at both the 5'- and 3'-termini of the viral genome. Disrupts TLR3 signaling by degrading the host adapter protein TICAM1/TRIF. Functionally, RNA-directed RNA polymerase 3D-POL replicates genomic and antigenomic RNA by recognizing replications specific signals. The chain is Genome polyprotein from Homo sapiens (Human).